The chain runs to 194 residues: GTP cyclohydrolase 1 (194 aa).

Zn(2+) is bound by residues Cys85, His88, and Cys156.

This sequence belongs to the GTP cyclohydrolase I family. Toroid-shaped homodecamer, composed of two pentamers of five dimers.

It carries out the reaction GTP + H2O = 7,8-dihydroneopterin 3'-triphosphate + formate + H(+). It functions in the pathway cofactor biosynthesis; 7,8-dihydroneopterin triphosphate biosynthesis; 7,8-dihydroneopterin triphosphate from GTP: step 1/1. The sequence is that of GTP cyclohydrolase 1 from Bacteroides fragilis (strain YCH46).